The chain runs to 432 residues: ATP-dependent RNA helicase RhlB (432 aa).

A Q motif motif is present at residues 9–37; the sequence is QRFADLPLHAEVIQALNENGFEFCTPIQA. Positions 40-219 constitute a Helicase ATP-binding domain; it reads LPVLLKAKDI…YDHMNDPEKV (180 aa). 53-60 serves as a coordination point for ATP; that stretch reads AQTGTGKT. Positions 165–168 match the DEAD box motif; it reads DEAD. One can recognise a Helicase C-terminal domain in the interval 243–390; it reads KMRLLLTLME…VSRYDREALL (148 aa). The segment at 395–432 is disordered; that stretch reads TPVKIHRKHPTSRTRDGAKGAHRSGGARPPRHRTRRPS. Over residues 423-432 the composition is skewed to basic residues; the sequence is PPRHRTRRPS.

The protein belongs to the DEAD box helicase family. RhlB subfamily. Component of the RNA degradosome, which is a multiprotein complex involved in RNA processing and mRNA degradation.

The protein resides in the cytoplasm. The enzyme catalyses ATP + H2O = ADP + phosphate + H(+). Its function is as follows. DEAD-box RNA helicase involved in RNA degradation. Has RNA-dependent ATPase activity and unwinds double-stranded RNA. The polypeptide is ATP-dependent RNA helicase RhlB (Shewanella denitrificans (strain OS217 / ATCC BAA-1090 / DSM 15013)).